Reading from the N-terminus, the 349-residue chain is N-acetyl-gamma-glutamyl-phosphate reductase (349 aa).

Cys-149 is a catalytic residue.

This sequence belongs to the NAGSA dehydrogenase family. Type 1 subfamily.

Its subcellular location is the cytoplasm. The catalysed reaction is N-acetyl-L-glutamate 5-semialdehyde + phosphate + NADP(+) = N-acetyl-L-glutamyl 5-phosphate + NADPH + H(+). Its pathway is amino-acid biosynthesis; L-arginine biosynthesis; N(2)-acetyl-L-ornithine from L-glutamate: step 3/4. In terms of biological role, catalyzes the NADPH-dependent reduction of N-acetyl-5-glutamyl phosphate to yield N-acetyl-L-glutamate 5-semialdehyde. This Acinetobacter baumannii (strain ACICU) protein is N-acetyl-gamma-glutamyl-phosphate reductase.